A 160-amino-acid chain; its full sequence is Bacterial microcompartment shell protein PduK (160 aa).

One can recognise a BMC domain in the interval 11-96 (SLGLLEVCGL…PGEGILLAET (86 aa)).

It belongs to the bacterial microcompartments protein family. Interacts with shell proteins PduA and PduP and assembly protein PduM. Requires Fe cation as cofactor.

It is found in the bacterial microcompartment. It participates in polyol metabolism; 1,2-propanediol degradation. Functionally, a minor shell protein of the bacterial microcompartment (BMC) dedicated to 1,2-propanediol (1,2-PD) degradation. The isolated BMC shell component protein ratio for J:A:B':B:K:T:U is approximately 15:10:7:6:1:1:2. Not required for structural integrity of BMCs nor to mitigate propionaldehyde toxicity, it might be involved in spatial organization of BMCs. Its function is as follows. The 1,2-PD-specific bacterial microcompartment (BMC) concentrates low levels of 1,2-PD catabolic enzymes, concentrates volatile reaction intermediates thus enhancing pathway flux and keeps the level of toxic, mutagenic propionaldehyde low. The sequence is that of Bacterial microcompartment shell protein PduK from Salmonella typhimurium (strain LT2 / SGSC1412 / ATCC 700720).